A 150-amino-acid polypeptide reads, in one-letter code: Large ribosomal subunit protein uL15 (150 aa).

Residues 1 to 55 (MADNEILQMHDLKPAPGAKKDRTRVGRGEGSKGKTSGRGAKGQTKRNHVRPGFEG) form a disordered region. The segment covering 8-32 (QMHDLKPAPGAKKDRTRVGRGEGSK) has biased composition (basic and acidic residues).

It belongs to the universal ribosomal protein uL15 family. As to quaternary structure, part of the 50S ribosomal subunit.

In terms of biological role, binds to the 23S rRNA. The protein is Large ribosomal subunit protein uL15 of Bifidobacterium longum (strain NCC 2705).